We begin with the raw amino-acid sequence, 744 residues long: MAPSFDHLPDPEEDEYDEEELDISDLRERFEVQLEQGLDTFVVIDGLPEVNEDTKPKLIKFLLRKLDSVGQTKKDSIHMPIGPDGKSHKFAFVEYSSPVEAIAACKALDGVPLDKKHTLRVNKLTDIDRYGREGRIDENYTPPKIEEFTEKEHLRSWLADPAGRGRDQFVMYKDDRVQVLWNNEKDAPESIVDRQHWTESFVQWSPQGTFLTSMHQQGVQLWGGPSWTRQKRFAHPFVNLVDFSPGEKYLTTWSNRPITIGEEGHPALSIDDDGKNYVIWDIETGLPLRSFANLDLPSNSVDADGNPIKRKIQWPAFKWSSDDKYVARLTQGSSISVYELPKMNLLDKTSIKIDGVMDFDWAPATPHREGVKTYEQLFCYWTPEIGSNPAKVGLMSIPSKEVVRTLNLFSVTDAKLHWQSDASYLCVKVDRHSKSKKSLATSLEIFRVKEKGVPVEVVDSIKDTVINFAWEPKGDRFVIITTAEVVAATAVPPKTSVSFYCPEKVKGNGVGNFKHIRTYDKKNSNAIYWSPKGRFVIVATVHSQQSFDMEFYDMDFEGEKPESDKDLTANLQLMNTADHYGVTDIDWDPTGRFVATSASIWKHTMENGYHLYDFKGEQLREEPVEKFKQWLWRPRPPTLLSKEEQKQIRKNLREYSKVFDQEDADRGASADLAVVEHRRRLLDEWLAWRANMEEDVKADREDAGLPLDPLEPLKSKMASGDEGQAIEIEEIVEEIVEETEEIIS.

The disordered stretch occupies residues 1–21 (MAPSFDHLPDPEEDEYDEEEL). The segment covering 11-21 (PEEDEYDEEEL) has biased composition (acidic residues). One can recognise an RRM domain in the interval 40 to 126 (TFVVIDGLPE…HTLRVNKLTD (87 aa)). WD repeat units lie at residues 193–232 (DRQH…RQKR), 234–290 (AHPF…PLRS), 307–348 (PIKR…LLDK), and 577–622 (ADHY…LREE).

This sequence belongs to the eIF-3 subunit B family. In terms of assembly, component of the eukaryotic translation initiation factor 3 (eIF-3) complex.

It localises to the cytoplasm. Its function is as follows. RNA-binding component of the eukaryotic translation initiation factor 3 (eIF-3) complex, which is involved in protein synthesis of a specialized repertoire of mRNAs and, together with other initiation factors, stimulates binding of mRNA and methionyl-tRNAi to the 40S ribosome. The eIF-3 complex specifically targets and initiates translation of a subset of mRNAs involved in cell proliferation. The sequence is that of Eukaryotic translation initiation factor 3 subunit B (prt1) from Botryotinia fuckeliana (strain B05.10) (Noble rot fungus).